A 977-amino-acid polypeptide reads, in one-letter code: Short transient receptor potential channel 4 (977 aa).

At 1-324 the chain is on the cytoplasmic side; the sequence is MAQFYYKRNV…YDEFPGWRRR (324 aa). 4 ANK repeats span residues 29-60, 71-93, 96-118, and 141-165; these read LSPS…IYFK, RTAL…LSFN, VGDA…LLNH, and PDIT…VQKG. Zn(2+) contacts are provided by histidine 172, cysteine 176, cysteine 178, and cysteine 181. Residues 223 to 260 are a coiled coil; that stretch reads LSWELQELSKVENEFKSEYEELSRQCKQFAKDLLDQTR. The segment at residues 325–359 is an intramembrane region (discontinuously helical); that stretch reads HWAVKMVTCFIIGLLFPVFSVCYLIAPKSPLGLFI. Residues 360–362 are Cytoplasmic-facing; the sequence is RKP. The helical transmembrane segment at 363–383 threads the bilayer; that stretch reads FIKFICHTASYLTFLFLLLLA. The Extracellular segment spans residues 384–403; sequence SQHIDRSDLNRQGPPPTIVE. Residues 404 to 418 form a helical membrane-spanning segment; it reads WMILPWVLGFIWGEI. Ca(2+)-binding residues include glutamate 417, glutamine 420, asparagine 435, and aspartate 438. At 419–432 the chain is on the cytoplasmic side; sequence KQMWDGGLQDYIHD. Residues 433-453 form a helical membrane-spanning segment; the sequence is WWNLMDFVMNSLYLATISLKI. Residues 454-475 are Extracellular-facing; the sequence is VAFVKYSALNPRESWDMWHPTL. Residues 476-498 traverse the membrane as a helical segment; it reads VAEALFAIANIFSSLRLISLFTA. Residues 499–511 lie on the Cytoplasmic side of the membrane; that stretch reads NSHLGPLQISLGR. Residues 512–534 form a helical membrane-spanning segment; the sequence is MLLDILKFLFIYCLVLLAFANGL. At 535–599 the chain is on the extracellular side; that stretch reads NQLYFYYEET…HEFTDFVGAT (65 aa). An intrachain disulfide couples cysteine 549 to cysteine 554. A helical transmembrane segment spans residues 600–620; that stretch reads MFGTYNVISLVVLLNMLIAMM. Residues 615 to 977 form an interaction with ITPR1, ITPR2 and ITPR3 region; sequence MLIAMMNNSY…AHEDYVTTRL (363 aa). Residues 621–977 lie on the Cytoplasmic side of the membrane; it reads NNSYQLIADH…AHEDYVTTRL (357 aa). The tract at residues 767 to 790 is disordered; it reads AASSASSADSDEKSHSEGNGKDKR. The span at 776–787 shows a compositional bias: basic and acidic residues; it reads SDEKSHSEGNGK. Tyrosine 959 and tyrosine 972 each carry phosphotyrosine; by FYN. The segment at 975–977 is PDZ-binding domain; that stretch reads TRL.

The protein belongs to the transient receptor (TC 1.A.4) family. STrpC subfamily. TRPC4 sub-subfamily. Homotetramer. Heterotetramer with TRPC1 and/or TRPC5. Forms a heteromeric ion channel with TRPC1, with a 1:3 TRPC1:TRPC4 stoichiometry. Interacts with TRPC4AP. Isoform alpha but not isoform beta interacts with ITPR1, ITPR2 and ITPR3. Interacts with NHERF1. Interacts with MX1 and RNF24. Interacts (via CIRB domain) with SESTD1 (via the spectrin 1 repeat) and SPTBN5 (via C-terminus). Interacts with CDH5 and CTNNB1. Interacts (via protein 4.1-binding domain) with EPB41L2. Interacts with PLSCR1.

The protein resides in the cell membrane. It carries out the reaction Ca(2+)(in) = Ca(2+)(out). It catalyses the reaction Na(+)(in) = Na(+)(out). The enzyme catalyses Li(+)(in) = Li(+)(out). The catalysed reaction is Cs(+)(in) = Cs(+)(out). Its activity is regulated as follows. May be operated by a phosphatidylinositol second messenger system activated by receptor tyrosine kinases or G-protein coupled receptors. May be activated by intracellular calcium store depletion. Functionally, forms a receptor-activated non-selective calcium permeant cation channel. Acts as a cell-cell contact-dependent endothelial calcium entry channel. Forms a homomeric ion channel or a heteromeric ion channel with TRPC1; the heteromeric ion channel has reduced calcium permeability compared to the homomeric channel. Also permeable to monovalent ions including sodium, lithium and cesium ions. In terms of biological role, forms a non-selective a receptor-activated calcium permeant cation channel. Probably is operated by a phosphatidylinositol second messenger system activated by receptor tyrosine kinases or G-protein coupled receptors. This Rattus norvegicus (Rat) protein is Short transient receptor potential channel 4 (Trpc4).